The chain runs to 189 residues: Interferon alpha-D (189 aa).

The N-terminal stretch at 1–23 (MAPAWSLLLALLLLSCNAICSLG) is a signal peptide. Cystine bridges form between Cys-24/Cys-122 and Cys-52/Cys-162.

It belongs to the alpha/beta interferon family.

It is found in the secreted. In terms of biological role, produced by macrophages, IFN-alpha have antiviral activities. Interferon stimulates the production of two enzymes: a protein kinase and an oligoadenylate synthetase. This is Interferon alpha-D (IFNAD) from Bos taurus (Bovine).